A 286-amino-acid polypeptide reads, in one-letter code: Ribosomal RNA small subunit methyltransferase A (286 aa).

S-adenosyl-L-methionine is bound by residues N28, L30, G55, E77, D103, and N123.

The protein belongs to the class I-like SAM-binding methyltransferase superfamily. rRNA adenine N(6)-methyltransferase family. RsmA subfamily.

It localises to the cytoplasm. The catalysed reaction is adenosine(1518)/adenosine(1519) in 16S rRNA + 4 S-adenosyl-L-methionine = N(6)-dimethyladenosine(1518)/N(6)-dimethyladenosine(1519) in 16S rRNA + 4 S-adenosyl-L-homocysteine + 4 H(+). In terms of biological role, specifically dimethylates two adjacent adenosines (A1518 and A1519) in the loop of a conserved hairpin near the 3'-end of 16S rRNA in the 30S particle. May play a critical role in biogenesis of 30S subunits. The sequence is that of Ribosomal RNA small subunit methyltransferase A from Bradyrhizobium sp. (strain ORS 278).